The primary structure comprises 310 residues: Probable manganese-dependent inorganic pyrophosphatase (310 aa).

Positions 9, 13, 15, 75, 97, and 149 each coordinate Mn(2+).

It belongs to the PPase class C family. Mn(2+) serves as cofactor.

The protein resides in the cytoplasm. It carries out the reaction diphosphate + H2O = 2 phosphate + H(+). The chain is Probable manganese-dependent inorganic pyrophosphatase from Brevibacillus brevis (strain 47 / JCM 6285 / NBRC 100599).